Here is an 862-residue protein sequence, read N- to C-terminus: DNA gyrase subunit A (862 aa).

A Topo IIA-type catalytic domain is found at 38-501 (LPDARDGLKP…DYDDIDVEDL (464 aa)). The O-(5'-phospho-DNA)-tyrosine intermediate role is filled by Tyr126. Residues 528-534 (QKRGGKG) carry the GyrA-box motif. The interval 843–862 (KEESDDDDIVADDTQEQDME) is disordered. Over residues 845–862 (ESDDDDIVADDTQEQDME) the composition is skewed to acidic residues.

Belongs to the type II topoisomerase GyrA/ParC subunit family. As to quaternary structure, heterotetramer, composed of two GyrA and two GyrB chains. In the heterotetramer, GyrA contains the active site tyrosine that forms a transient covalent intermediate with DNA, while GyrB binds cofactors and catalyzes ATP hydrolysis.

The protein localises to the cytoplasm. The catalysed reaction is ATP-dependent breakage, passage and rejoining of double-stranded DNA.. Its function is as follows. A type II topoisomerase that negatively supercoils closed circular double-stranded (ds) DNA in an ATP-dependent manner to modulate DNA topology and maintain chromosomes in an underwound state. Negative supercoiling favors strand separation, and DNA replication, transcription, recombination and repair, all of which involve strand separation. Also able to catalyze the interconversion of other topological isomers of dsDNA rings, including catenanes and knotted rings. Type II topoisomerases break and join 2 DNA strands simultaneously in an ATP-dependent manner. This is DNA gyrase subunit A from Campylobacter fetus.